Here is a 395-residue protein sequence, read N- to C-terminus: MPESTNTIINSSVKKIKLSALCELCHGRKAVMKRPKNLMKLCKECFYNIFETEIHNTIISNDLFYRGEKIAIGASGGKDSTVLASILKTLNERYDYGLNLVLLSIDEGIKGYRDDSLATVKRNQKQYDMPLEIVSYKDLYNWSMDEIVACAGIRSSCTYCGVLRRQALDRGAEKLGIKHVVTGHNADDVAETVLMNLLRGDVARLESSTNIMTTSAGSPIKRSKPFKYTYQKEIVLYAHYKKLDYFSTECTYAPEAFRGTARELLKSLESIRPSCIMDIIYSGEHLVLAPKKQKRKTVAYKNKNKNKKKSNSEQEEQEKQEQEVNPDGSISLNRNGIKKDGNTCEKCGYLSSNKICKACMLLNGLEINRAKVTIDNNSAIDGAAKLTKKLEQLSF.

Basic residues predominate over residues 297-309 (TVAYKNKNKNKKK). Positions 297-335 (TVAYKNKNKNKKKSNSEQEEQEKQEQEVNPDGSISLNRN) are disordered.

This sequence belongs to the TtcA family. CTU1/NCS6/ATPBD3 subfamily.

Its subcellular location is the cytoplasm. Its pathway is tRNA modification; 5-methoxycarbonylmethyl-2-thiouridine-tRNA biosynthesis. Functionally, plays a central role in 2-thiolation of mcm(5)S(2)U at tRNA wobble positions of tRNA(Lys), tRNA(Glu) and tRNA(Gln). Directly binds tRNAs and probably acts by catalyzing adenylation of tRNAs, an intermediate required for 2-thiolation. It is unclear whether it acts as a sulfurtransferase that transfers sulfur from thiocarboxylated URM1 onto the uridine of tRNAs at wobble position. Prior mcm(5) tRNA modification by the elongator complex is required for 2-thiolation. May also be involved in protein urmylation. This chain is Cytoplasmic tRNA 2-thiolation protein 1, found in Candida albicans (strain SC5314 / ATCC MYA-2876) (Yeast).